Here is a 382-residue protein sequence, read N- to C-terminus: MSQAFLPFSRPSIGDEEIAAVEQVLRSGWITTGPKNQALEEQFAQYVGSRHAVALSSATGAMHVTLLALGIGPGDEVITPSQTWVSTANMISLLGATPVFVDVDRDTLMTDAARIEAAITPRTKAIIPVHYAGAAFDLDPLYALADKHGIAVIEDAAHAAGTRYKGRHVGSQGTAIFSFHAIKNMTCAEGAMFVTDDEALANRVRMLKFHGLGVDAYDRLTHGRKPQAQVIEPGFKYNLADINAAIALVQLERLDAINARRTELATQYLQKLEGLPVQPLAVPNYPQQHAWHLFILRIDSERCGMDREAFMKGLQEQGIGTGIHFIATHLHTWYRQRAPHLSLPDTEWNSARLCSIPLFPDMTDQDLDRVVGAIEHLMGKRP.

The residue at position 183 (Lys-183) is an N6-(pyridoxal phosphate)lysine.

Belongs to the DegT/DnrJ/EryC1 family. ArnB subfamily. Homodimer. It depends on pyridoxal 5'-phosphate as a cofactor.

The catalysed reaction is UDP-4-amino-4-deoxy-beta-L-arabinose + 2-oxoglutarate = UDP-beta-L-threo-pentopyranos-4-ulose + L-glutamate. The protein operates within nucleotide-sugar biosynthesis; UDP-4-deoxy-4-formamido-beta-L-arabinose biosynthesis; UDP-4-deoxy-4-formamido-beta-L-arabinose from UDP-alpha-D-glucuronate: step 2/3. Its pathway is bacterial outer membrane biogenesis; lipopolysaccharide biosynthesis. Its function is as follows. Catalyzes the conversion of UDP-4-keto-arabinose (UDP-Ara4O) to UDP-4-amino-4-deoxy-L-arabinose (UDP-L-Ara4N). The modified arabinose is attached to lipid A and is required for resistance to polymyxin and cationic antimicrobial peptides. This is UDP-4-amino-4-deoxy-L-arabinose--oxoglutarate aminotransferase from Pseudomonas fluorescens (strain Pf0-1).